A 632-amino-acid chain; its full sequence is Mitoguardin 1 (632 aa).

Residues 70–90 (PVAKKLFVVTAVSAISVIFLA) form a helical membrane-spanning segment. 2 positions are modified to phosphoserine: S289 and S293.

Belongs to the mitoguardin family. Homodimer and heterodimer; forms heterodimers with MIGA2. Interacts with PLD6/MitoPLD.

It is found in the mitochondrion outer membrane. Functionally, regulator of mitochondrial fusion: acts by forming homo- and heterodimers at the mitochondrial outer membrane and facilitating the formation of PLD6/MitoPLD dimers. May act by regulating phospholipid metabolism via PLD6/MitoPLD. In Homo sapiens (Human), this protein is Mitoguardin 1.